The chain runs to 415 residues: AP-3 complex subunit mu (415 aa).

In terms of domain architecture, MHD spans Ser-178–Arg-414.

Belongs to the adaptor complexes medium subunit family. Adaptor protein complex 3 (AP-3) is a heterotetramer composed of two large adaptins (delta-type subunit and beta-type subunit), a medium adaptin (mu-type subunit) and a small adaptin (sigma-type subunit).

It is found in the cytoplasm. It localises to the golgi apparatus. The protein resides in the cytoplasmic vesicle membrane. Functionally, part of the AP-3 complex, an adaptor-related complex which seems to be clathrin-associated. The complex is associated with the Golgi region as well as more peripheral structures. It facilitates the budding of vesicles from the Golgi membrane and may be directly involved in trafficking to the vacuole. It also functions in maintaining the identity of lytic vacuoles and in regulating the transition between storage and lytic vacuoles. The chain is AP-3 complex subunit mu (AP3M) from Arabidopsis thaliana (Mouse-ear cress).